The primary structure comprises 462 residues: Aquaporin-1 (462 aa).

Polar residues predominate over residues 1 to 11 (MTMRSPLTNDH). Residues 1–24 (MTMRSPLTNDHPQPLRASPLSEHD) are disordered. Topologically, residues 1-146 (MTMRSPLTND…KWMNSDWKNH (146 aa)) are cytoplasmic. Residues 147-167 (IVAVIGELIGTSLFLFFGYAG) form a helical membrane-spanning segment. Over 168–182 (IEVAKLQGREPPDLE) the chain is Extracellular. Residues 183 to 203 (VLFYISATFGASLMVTAWIFF) traverse the membrane as a helical segment. The Cytoplasmic portion of the chain corresponds to 204 to 229 (RISGGLFNPAVTLALAILKAVSPIRA). The NPA 1 signature appears at 211-213 (NPA). The helical transmembrane segment at 230–250 (FLLVITQLGASCLAAILVQEI) threads the bilayer. Residues 251-269 (FPKQLDVATTLGSGTSMGQ) are Extracellular-facing. The helical transmembrane segment at 270–290 (GFVIEAITTAALIFTIIMLAV) threads the bilayer. Over 291-296 (EKHKAT) the chain is Cytoplasmic. A helical transmembrane segment spans residues 297–317 (FVAPIGIGLALFVAHMVAVPF). Residues 318 to 341 (TGASLNPARSFGPSAIVWNFPREH) are Extracellular-facing. The NPA 2 motif lies at 323-325 (NPA). A helical transmembrane segment spans residues 342–362 (WIYWVGPILGAGLAVLFFRLI). The Cytoplasmic portion of the chain corresponds to 363-462 (KLMEYEMANP…WRRQQYRNVV (100 aa)). Residues 407–433 (GKSWYRDDSSSGSMRRKESVNSFTGGR) are disordered. The span at 410–425 (WYRDDSSSGSMRRKES) shows a compositional bias: basic and acidic residues.

It belongs to the MIP/aquaporin (TC 1.A.8) family.

The protein localises to the membrane. The enzyme catalyses H2O(in) = H2O(out). Functionally, water channel required to facilitate the transport of water across membranes. Involved in conidiation. The sequence is that of Aquaporin-1 from Botryotinia fuckeliana (strain B05.10) (Noble rot fungus).